Reading from the N-terminus, the 170-residue chain is MTRKKRRLILIAACGSVLALAVGLILYAMSGSIVFFRSPTDIAKQAIAPGTRLRLGGLVKDGSLRRGPDQTVDFAVTDTNETVEVHYKGLLPDLFREGQGVVAEGVLEPGGQFRADTVLAKHDESYMPREVADALKAQGRWQEGGPNRGGPAPKPATAAADSTLGPRSER.

Topologically, residues 1-7 (MTRKKRR) are cytoplasmic. Residues 8–28 (LILIAACGSVLALAVGLILYA) traverse the membrane as a helical; Signal-anchor for type II membrane protein segment. Residues 29–170 (MSGSIVFFRS…DSTLGPRSER (142 aa)) lie on the Periplasmic side of the membrane. Heme-binding residues include His122 and Tyr126. The disordered stretch occupies residues 132 to 170 (ADALKAQGRWQEGGPNRGGPAPKPATAAADSTLGPRSER).

Belongs to the CcmE/CycJ family.

The protein localises to the cell inner membrane. In terms of biological role, heme chaperone required for the biogenesis of c-type cytochromes. Transiently binds heme delivered by CcmC and transfers the heme to apo-cytochromes in a process facilitated by CcmF and CcmH. This is Cytochrome c-type biogenesis protein CcmE from Methylobacterium radiotolerans (strain ATCC 27329 / DSM 1819 / JCM 2831 / NBRC 15690 / NCIMB 10815 / 0-1).